Consider the following 91-residue polypeptide: Succinate dehydrogenase assembly factor 1A, mitochondrial (91 aa).

Belongs to the complex I LYR family. SDHAF1 subfamily. As to quaternary structure, interacts with the iron-sulfur protein subunit within the SDH catalytic dimer.

It is found in the mitochondrion matrix. Its function is as follows. Plays an essential role in the assembly of succinate dehydrogenase (SDH), an enzyme complex (also referred to as respiratory complex II) that is a component of both the tricarboxylic acid (TCA) cycle and the mitochondrial electron transport chain, and which couples the oxidation of succinate to fumarate with the reduction of ubiquinone (coenzyme Q) to ubiquinol. Promotes maturation of the iron-sulfur protein subunit of the SDH catalytic dimer, protecting it from the deleterious effects of oxidants. May act together with SDHAF3. In Dictyostelium discoideum (Social amoeba), this protein is Succinate dehydrogenase assembly factor 1A, mitochondrial.